Consider the following 366-residue polypeptide: 3-dehydroquinate synthase (366 aa).

Residues 74–79, 108–112, 132–133, lysine 144, lysine 153, and 171–174 contribute to the NAD(+) site; these read SGEAAK, GVVGD, TT, and FLRT. Zn(2+) is bound by residues glutamate 186, histidine 249, and histidine 266.

Belongs to the sugar phosphate cyclases superfamily. Dehydroquinate synthase family. Requires Co(2+) as cofactor. The cofactor is Zn(2+). It depends on NAD(+) as a cofactor.

The protein localises to the cytoplasm. The enzyme catalyses 7-phospho-2-dehydro-3-deoxy-D-arabino-heptonate = 3-dehydroquinate + phosphate. The protein operates within metabolic intermediate biosynthesis; chorismate biosynthesis; chorismate from D-erythrose 4-phosphate and phosphoenolpyruvate: step 2/7. Catalyzes the conversion of 3-deoxy-D-arabino-heptulosonate 7-phosphate (DAHP) to dehydroquinate (DHQ). The sequence is that of 3-dehydroquinate synthase from Geobacillus kaustophilus (strain HTA426).